The chain runs to 122 residues: Large ribosomal subunit protein uL14 (122 aa).

The protein belongs to the universal ribosomal protein uL14 family. In terms of assembly, part of the 50S ribosomal subunit. Forms a cluster with proteins L3 and L19. In the 70S ribosome, L14 and L19 interact and together make contacts with the 16S rRNA in bridges B5 and B8.

In terms of biological role, binds to 23S rRNA. Forms part of two intersubunit bridges in the 70S ribosome. The sequence is that of Large ribosomal subunit protein uL14 from Vesicomyosocius okutanii subsp. Calyptogena okutanii (strain HA).